We begin with the raw amino-acid sequence, 212 residues long: Hydroxyacylglutathione hydrolase GloC (212 aa).

7 residues coordinate Zn(2+): His55, His57, Asp59, His60, His132, Asp151, and His192.

Belongs to the metallo-beta-lactamase superfamily. Glyoxalase II family. It depends on Zn(2+) as a cofactor.

The catalysed reaction is an S-(2-hydroxyacyl)glutathione + H2O = a 2-hydroxy carboxylate + glutathione + H(+). The enzyme catalyses (R)-S-lactoylglutathione + H2O = (R)-lactate + glutathione + H(+). The protein operates within secondary metabolite metabolism; methylglyoxal degradation; (R)-lactate from methylglyoxal: step 2/2. Type II glyoxalase, isozyme of GloB, that hydrolyzes (R)-S-lactoylglutathione to (R)-lactate and glutathione. Plays a role in methylglyoxal (MG) detoxification. The polypeptide is Hydroxyacylglutathione hydrolase GloC (Haemophilus influenzae (strain ATCC 51907 / DSM 11121 / KW20 / Rd)).